The primary structure comprises 135 residues: ATP synthase epsilon chain (135 aa).

The disordered stretch occupies residues 91-122; it reads EAQKQLSEAEQAWSKFDGQPNSPDKIKAQQAF.

This sequence belongs to the ATPase epsilon chain family. In terms of assembly, F-type ATPases have 2 components, CF(1) - the catalytic core - and CF(0) - the membrane proton channel. CF(1) has five subunits: alpha(3), beta(3), gamma(1), delta(1), epsilon(1). CF(0) has three main subunits: a, b and c.

The protein resides in the cellular thylakoid membrane. In terms of biological role, produces ATP from ADP in the presence of a proton gradient across the membrane. The protein is ATP synthase epsilon chain of Synechococcus sp. (strain RCC307).